The following is a 349-amino-acid chain: Isopentenyl-diphosphate delta-isomerase (349 aa).

Substrate is bound at residue 6 to 7 (RK). FMN-binding positions include 62–64 (AMT), serine 93, and asparagine 122. A substrate-binding site is contributed by glutamine 152. Mg(2+) is bound at residue glutamate 153. FMN contacts are provided by residues lysine 184, threonine 214, 258-259 (GG), and 280-281 (AG).

Belongs to the IPP isomerase type 2 family. Homooctamer. Dimer of tetramers. Requires FMN as cofactor. It depends on NADPH as a cofactor. Mg(2+) serves as cofactor.

The protein localises to the cytoplasm. It carries out the reaction isopentenyl diphosphate = dimethylallyl diphosphate. Involved in the biosynthesis of isoprenoids. Catalyzes the 1,3-allylic rearrangement of the homoallylic substrate isopentenyl (IPP) to its allylic isomer, dimethylallyl diphosphate (DMAPP). This is Isopentenyl-diphosphate delta-isomerase from Bacillus cereus (strain 03BB102).